A 114-amino-acid chain; its full sequence is UPF0212 protein UNCMA_00570 (114 aa).

It belongs to the UPF0212 family.

The protein is UPF0212 protein UNCMA_00570 of Methanocella arvoryzae (strain DSM 22066 / NBRC 105507 / MRE50).